Consider the following 197-residue polypeptide: Peptide deformylase (197 aa).

Positions 106 and 148 each coordinate Fe cation. The active site involves Glu149. His152 serves as a coordination point for Fe cation.

The protein belongs to the polypeptide deformylase family. Fe(2+) is required as a cofactor.

It carries out the reaction N-terminal N-formyl-L-methionyl-[peptide] + H2O = N-terminal L-methionyl-[peptide] + formate. In terms of biological role, removes the formyl group from the N-terminal Met of newly synthesized proteins. Requires at least a dipeptide for an efficient rate of reaction. N-terminal L-methionine is a prerequisite for activity but the enzyme has broad specificity at other positions. This Mycobacterium tuberculosis (strain ATCC 25177 / H37Ra) protein is Peptide deformylase.